The chain runs to 420 residues: Probable acetate kinase (420 aa).

Residue N10 participates in Mg(2+) binding. K17 lines the ATP pocket. R97 is a binding site for substrate. Catalysis depends on D153, which acts as the Proton donor/acceptor. ATP is bound at residue 213–217; it reads HIGSG. E403 is a binding site for Mg(2+).

Belongs to the acetokinase family. Mg(2+) serves as cofactor.

The enzyme catalyses acetate + ATP = acetyl phosphate + ADP. It participates in metabolic intermediate biosynthesis; acetyl-CoA biosynthesis; acetyl-CoA from acetate: step 1/2. The polypeptide is Probable acetate kinase (Emericella nidulans (strain FGSC A4 / ATCC 38163 / CBS 112.46 / NRRL 194 / M139) (Aspergillus nidulans)).